The sequence spans 962 residues: Glycine dehydrogenase (decarboxylating) (962 aa).

N6-(pyridoxal phosphate)lysine is present on Lys-709.

This sequence belongs to the GcvP family. As to quaternary structure, the glycine cleavage system is composed of four proteins: P, T, L and H. The cofactor is pyridoxal 5'-phosphate.

The enzyme catalyses N(6)-[(R)-lipoyl]-L-lysyl-[glycine-cleavage complex H protein] + glycine + H(+) = N(6)-[(R)-S(8)-aminomethyldihydrolipoyl]-L-lysyl-[glycine-cleavage complex H protein] + CO2. The glycine cleavage system catalyzes the degradation of glycine. The P protein binds the alpha-amino group of glycine through its pyridoxal phosphate cofactor; CO(2) is released and the remaining methylamine moiety is then transferred to the lipoamide cofactor of the H protein. The polypeptide is Glycine dehydrogenase (decarboxylating) (Shewanella oneidensis (strain ATCC 700550 / JCM 31522 / CIP 106686 / LMG 19005 / NCIMB 14063 / MR-1)).